A 284-amino-acid chain; its full sequence is 2-dehydro-3-deoxyphosphooctonate aldolase (284 aa).

Belongs to the KdsA family.

It localises to the cytoplasm. It catalyses the reaction D-arabinose 5-phosphate + phosphoenolpyruvate + H2O = 3-deoxy-alpha-D-manno-2-octulosonate-8-phosphate + phosphate. Its pathway is carbohydrate biosynthesis; 3-deoxy-D-manno-octulosonate biosynthesis; 3-deoxy-D-manno-octulosonate from D-ribulose 5-phosphate: step 2/3. It functions in the pathway bacterial outer membrane biogenesis; lipopolysaccharide biosynthesis. This is 2-dehydro-3-deoxyphosphooctonate aldolase from Aliivibrio salmonicida (strain LFI1238) (Vibrio salmonicida (strain LFI1238)).